The sequence spans 426 residues: Glutamate-1-semialdehyde 2,1-aminomutase (426 aa).

An N6-(pyridoxal phosphate)lysine modification is found at K265.

The protein belongs to the class-III pyridoxal-phosphate-dependent aminotransferase family. HemL subfamily. Homodimer. Requires pyridoxal 5'-phosphate as cofactor.

It is found in the cytoplasm. The catalysed reaction is (S)-4-amino-5-oxopentanoate = 5-aminolevulinate. It participates in porphyrin-containing compound metabolism; protoporphyrin-IX biosynthesis; 5-aminolevulinate from L-glutamyl-tRNA(Glu): step 2/2. The protein is Glutamate-1-semialdehyde 2,1-aminomutase of Pectobacterium atrosepticum (strain SCRI 1043 / ATCC BAA-672) (Erwinia carotovora subsp. atroseptica).